The chain runs to 149 residues: UPF0178 protein Pmen_0294 (149 aa).

Belongs to the UPF0178 family.

The sequence is that of UPF0178 protein Pmen_0294 from Ectopseudomonas mendocina (strain ymp) (Pseudomonas mendocina).